Here is a 332-residue protein sequence, read N- to C-terminus: Holliday junction branch migration complex subunit RuvB (332 aa).

Residues Met1 to Tyr181 form a large ATPase domain (RuvB-L) region. ATP-binding positions include Leu20, Arg21, Gly62, Lys65, Thr66, Thr67, Glu128–Phe130, Arg171, Tyr181, and Arg218. Thr66 provides a ligand contact to Mg(2+). A small ATPAse domain (RuvB-S) region spans residues Glu182–Asp252. The tract at residues Gln255–Glu332 is head domain (RuvB-H). Arg291, Arg310, Arg312, and Arg315 together coordinate DNA.

The protein belongs to the RuvB family. In terms of assembly, homohexamer. Forms an RuvA(8)-RuvB(12)-Holliday junction (HJ) complex. HJ DNA is sandwiched between 2 RuvA tetramers; dsDNA enters through RuvA and exits via RuvB. An RuvB hexamer assembles on each DNA strand where it exits the tetramer. Each RuvB hexamer is contacted by two RuvA subunits (via domain III) on 2 adjacent RuvB subunits; this complex drives branch migration. In the full resolvosome a probable DNA-RuvA(4)-RuvB(12)-RuvC(2) complex forms which resolves the HJ.

Its subcellular location is the cytoplasm. It carries out the reaction ATP + H2O = ADP + phosphate + H(+). The RuvA-RuvB-RuvC complex processes Holliday junction (HJ) DNA during genetic recombination and DNA repair, while the RuvA-RuvB complex plays an important role in the rescue of blocked DNA replication forks via replication fork reversal (RFR). RuvA specifically binds to HJ cruciform DNA, conferring on it an open structure. The RuvB hexamer acts as an ATP-dependent pump, pulling dsDNA into and through the RuvAB complex. RuvB forms 2 homohexamers on either side of HJ DNA bound by 1 or 2 RuvA tetramers; 4 subunits per hexamer contact DNA at a time. Coordinated motions by a converter formed by DNA-disengaged RuvB subunits stimulates ATP hydrolysis and nucleotide exchange. Immobilization of the converter enables RuvB to convert the ATP-contained energy into a lever motion, pulling 2 nucleotides of DNA out of the RuvA tetramer per ATP hydrolyzed, thus driving DNA branch migration. The RuvB motors rotate together with the DNA substrate, which together with the progressing nucleotide cycle form the mechanistic basis for DNA recombination by continuous HJ branch migration. Branch migration allows RuvC to scan DNA until it finds its consensus sequence, where it cleaves and resolves cruciform DNA. In Streptococcus sanguinis (strain SK36), this protein is Holliday junction branch migration complex subunit RuvB.